Here is a 206-residue protein sequence, read N- to C-terminus: Large ribosomal subunit protein uL4 (206 aa).

Residues K44–S80 form a disordered region.

It belongs to the universal ribosomal protein uL4 family. In terms of assembly, part of the 50S ribosomal subunit.

Its function is as follows. One of the primary rRNA binding proteins, this protein initially binds near the 5'-end of the 23S rRNA. It is important during the early stages of 50S assembly. It makes multiple contacts with different domains of the 23S rRNA in the assembled 50S subunit and ribosome. Forms part of the polypeptide exit tunnel. This Oleidesulfovibrio alaskensis (strain ATCC BAA-1058 / DSM 17464 / G20) (Desulfovibrio alaskensis) protein is Large ribosomal subunit protein uL4.